We begin with the raw amino-acid sequence, 152 residues long: Ribosome maturation factor RimP (152 aa).

It belongs to the RimP family.

Its subcellular location is the cytoplasm. Its function is as follows. Required for maturation of 30S ribosomal subunits. In Elusimicrobium minutum (strain Pei191), this protein is Ribosome maturation factor RimP.